We begin with the raw amino-acid sequence, 392 residues long: Stilbene synthase 5 (392 aa).

55-58 (KFNR) is a binding site for substrate. Cys-164 is an active-site residue. Substrate is bound by residues Leu-267 and 305 to 307 (GGP).

Belongs to the thiolase-like superfamily. Chalcone/stilbene synthases family. As to quaternary structure, homodimer.

Its subcellular location is the cytoplasm. The enzyme catalyses 4-coumaroyl-CoA + 3 malonyl-CoA + 3 H(+) = trans-resveratrol + 4 CO2 + 4 CoA. Its pathway is phytoalexin biosynthesis; 3,4',5-trihydroxystilbene biosynthesis; 3,4',5-trihydroxystilbene from trans-4-coumarate: step 2/2. Its function is as follows. Mediates resistance to pathogens which are sensitive to stilbenes. This Vitis vinifera (Grape) protein is Stilbene synthase 5.